Consider the following 172-residue polypeptide: Peptidyl-prolyl cis-trans isomerase (172 aa).

The region spanning 7–170 (FFDMSVGGQP…KKVVVEDCGQ (164 aa)) is the PPIase cyclophilin-type domain.

Belongs to the cyclophilin-type PPIase family. In terms of processing, not glycosylated. Expressed in pollen.

It is found in the cytoplasm. It catalyses the reaction [protein]-peptidylproline (omega=180) = [protein]-peptidylproline (omega=0). Binds cyclosporin A (CsA). CsA mediates some of its effects via an inhibitory action on PPIase. In terms of biological role, PPIases accelerate the folding of proteins. It catalyzes the cis-trans isomerization of proline imidic peptide bonds in oligopeptides. This Catharanthus roseus (Madagascar periwinkle) protein is Peptidyl-prolyl cis-trans isomerase (PCKR1).